Reading from the N-terminus, the 259-residue chain is Imidazole glycerol phosphate synthase subunit HisF (259 aa).

Residues aspartate 11 and aspartate 130 contribute to the active site.

It belongs to the HisA/HisF family. In terms of assembly, heterodimer of HisH and HisF.

Its subcellular location is the cytoplasm. The catalysed reaction is 5-[(5-phospho-1-deoxy-D-ribulos-1-ylimino)methylamino]-1-(5-phospho-beta-D-ribosyl)imidazole-4-carboxamide + L-glutamine = D-erythro-1-(imidazol-4-yl)glycerol 3-phosphate + 5-amino-1-(5-phospho-beta-D-ribosyl)imidazole-4-carboxamide + L-glutamate + H(+). Its pathway is amino-acid biosynthesis; L-histidine biosynthesis; L-histidine from 5-phospho-alpha-D-ribose 1-diphosphate: step 5/9. Functionally, IGPS catalyzes the conversion of PRFAR and glutamine to IGP, AICAR and glutamate. The HisF subunit catalyzes the cyclization activity that produces IGP and AICAR from PRFAR using the ammonia provided by the HisH subunit. This is Imidazole glycerol phosphate synthase subunit HisF from Lactococcus lactis subsp. cremoris (strain SK11).